Reading from the N-terminus, the 278-residue chain is Endoplasmic reticulum junction formation protein lunapark (278 aa).

Topologically, residues 1–45 (MFSALGKWVRGSRNDKDFVTKYTADLSQITSQIHQLDVALKKSQS) are cytoplasmic. The helical transmembrane segment at 46 to 66 (ILSQWQSNLTFYGIALTVLAL) threads the bilayer. Over 67 to 77 (SYTYWEYHGYR) the chain is Lumenal. The chain crosses the membrane as a helical span at residues 78–98 (PYLVVTALLCIGSLILFKWAL). Residues 99–278 (TKLYAFYNNN…PSQSEKEKTK (180 aa)) lie on the Cytoplasmic side of the membrane. Residues 107–183 (NNRLRKLAKL…ELEKFKKESH (77 aa)) adopt a coiled-coil conformation. The segment at 223–247 (CPQCHWKSNCYRLASKPIIFICPHC) adopts a C4-type; plays a role in ER morphology zinc-finger fold. The tract at residues 258-278 (EDAIEAKQPAQPSQSEKEKTK) is disordered.

The protein belongs to the lunapark family. Interacts with RTN1; this interaction is negatively regulated by SEY1. Interacts with SEY1 and YOP1.

Its subcellular location is the endoplasmic reticulum membrane. Its function is as follows. Plays a role in tubular endoplasmic reticulum network formation and maintenance. Works in conjunction with the ER shaping proteins (reticulons RTN1 and RTN2, YOP1), and in antagonism to SEY1 to maintain the network in a dynamic equilibrium. May counterbalance SEY1-directed polygon formation by promoting polygon loss through ring closure. The sequence is that of Endoplasmic reticulum junction formation protein lunapark (LNP1) from Saccharomyces cerevisiae (strain ATCC 204508 / S288c) (Baker's yeast).